Consider the following 431-residue polypeptide: Tol-Pal system protein TolB (431 aa).

Positions 1–19 (MKRLLFFLICVFFSKTSYS) are cleaved as a signal peptide.

This sequence belongs to the TolB family. In terms of assembly, the Tol-Pal system is composed of five core proteins: the inner membrane proteins TolA, TolQ and TolR, the periplasmic protein TolB and the outer membrane protein Pal. They form a network linking the inner and outer membranes and the peptidoglycan layer.

Its subcellular location is the periplasm. In terms of biological role, part of the Tol-Pal system, which plays a role in outer membrane invagination during cell division and is important for maintaining outer membrane integrity. TolB occupies a key intermediary position in the Tol-Pal system because it communicates directly with both membrane-embedded components, Pal in the outer membrane and TolA in the inner membrane. The polypeptide is Tol-Pal system protein TolB (Wigglesworthia glossinidia brevipalpis).